The chain runs to 738 residues: Dipeptidyl peptidase 3 (738 aa).

A2 is modified (N-acetylalanine). H450 is a binding site for Zn(2+). E451 is a catalytic residue. H455 and E508 together coordinate Zn(2+).

The protein belongs to the peptidase M49 family. Requires Zn(2+) as cofactor.

The protein localises to the cytoplasm. It localises to the cytosol. It catalyses the reaction Release of an N-terminal dipeptide from a peptide comprising four or more residues, with broad specificity. Also acts on dipeptidyl 2-naphthylamides.. Its function is as follows. Cleaves and degrades bioactive peptides, including angiotensin, Leu-enkephalin and Met-enkephalin. Also cleaves Arg-Arg-beta-naphthylamide (in vitro). The chain is Dipeptidyl peptidase 3 (Dpp3) from Mus musculus (Mouse).